Reading from the N-terminus, the 154-residue chain is Ribosome maturation factor RimP (154 aa).

Belongs to the RimP family.

Its subcellular location is the cytoplasm. Functionally, required for maturation of 30S ribosomal subunits. The protein is Ribosome maturation factor RimP of Thioalkalivibrio sulfidiphilus (strain HL-EbGR7).